The chain runs to 522 residues: BTB/POZ domain-containing protein 3 (522 aa).

Residues 25–44 form a disordered region; the sequence is RSKKSSKKANTSSSSSNSSK. Residues 32-44 show a composition bias toward low complexity; sequence KANTSSSSSNSSK. Residues 120–190 enclose the BTB domain; the sequence is ADVHFVVGPP…IYCDEIDLAA (71 aa). A BACK domain is found at 235 to 300; it reads FEEPDLTQRC…NWAEVECQRQ (66 aa).

It is found in the cytoplasm. The protein resides in the cytosol. It localises to the nucleus. Acts as a key regulator of dendritic field orientation during development of sensory cortex. Also directs dendrites toward active axon terminals when ectopically expressed. The protein is BTB/POZ domain-containing protein 3 (BTBD3) of Homo sapiens (Human).